Consider the following 546-residue polypeptide: CTP synthase (546 aa).

Positions 1 to 266 (MTKYIFVTGG…GDYLVERLGL (266 aa)) are amidoligase domain. Residue serine 13 coordinates CTP. Residue serine 13 participates in UTP binding. 14–19 (SVGKGI) contributes to the ATP binding site. Tyrosine 54 contacts L-glutamine. Aspartate 71 contacts ATP. Residues aspartate 71 and glutamate 141 each contribute to the Mg(2+) site. CTP-binding positions include 148-150 (DIE), 187-192 (KTKPTQ), and lysine 223. UTP-binding positions include 187 to 192 (KTKPTQ) and lysine 223. A Glutamine amidotransferase type-1 domain is found at 291 to 533 (PIALVGKYVE…VAAAAQTLLA (243 aa)). Glycine 353 provides a ligand contact to L-glutamine. The active-site Nucleophile; for glutamine hydrolysis is the cysteine 380. Residues 381–384 (LGMQ), glutamate 404, and arginine 461 contribute to the L-glutamine site. Active-site residues include histidine 506 and glutamate 508.

This sequence belongs to the CTP synthase family. Homotetramer.

It catalyses the reaction UTP + L-glutamine + ATP + H2O = CTP + L-glutamate + ADP + phosphate + 2 H(+). The catalysed reaction is L-glutamine + H2O = L-glutamate + NH4(+). The enzyme catalyses UTP + NH4(+) + ATP = CTP + ADP + phosphate + 2 H(+). Its pathway is pyrimidine metabolism; CTP biosynthesis via de novo pathway; CTP from UDP: step 2/2. Its activity is regulated as follows. Allosterically activated by GTP, when glutamine is the substrate; GTP has no effect on the reaction when ammonia is the substrate. The allosteric effector GTP functions by stabilizing the protein conformation that binds the tetrahedral intermediate(s) formed during glutamine hydrolysis. Inhibited by the product CTP, via allosteric rather than competitive inhibition. Functionally, catalyzes the ATP-dependent amination of UTP to CTP with either L-glutamine or ammonia as the source of nitrogen. Regulates intracellular CTP levels through interactions with the four ribonucleotide triphosphates. In Chloroflexus aurantiacus (strain ATCC 29366 / DSM 635 / J-10-fl), this protein is CTP synthase.